The chain runs to 798 residues: ATP-dependent RecD2 DNA helicase (798 aa).

An ATP-binding site is contributed by 370–374 (GTGKT).

The protein belongs to the RecD family. RecD2 subfamily. In terms of assembly, interacts with SSB (sbbA).

The protein resides in the cytoplasm. It is found in the nucleoid. The enzyme catalyses Couples ATP hydrolysis with the unwinding of duplex DNA at the replication fork by translocating in the 5'-3' direction. This creates two antiparallel DNA single strands (ssDNA). The leading ssDNA polymer is the template for DNA polymerase III holoenzyme which synthesizes a continuous strand.. It carries out the reaction ATP + H2O = ADP + phosphate + H(+). In vivo may favor replication restart by preventing RecA from binding to blocked replication forks, avoiding unnecessary recombination during replication restart. Acts as a negative modulator of the RecA-ssDNA filament, may dissasemble RecA threads, can act as both a positive and negative regulator of strand exchange. Probably stabilizes or aids normal replication fork progression, is important for survival after treatment with DNA-damaging agents that can result in replication fork stress. Overcomes the inhibition of replication restart by RecA/RecO, probably by displacing RecA. Increasing levels inhibit PriA-dependent DNA replication initiation (but have little effect on ongoing replication) in vitro; may act by disturbing SsbA assembly. Probably has a role in recombinational DNA repair. Does not seem to contribute to mismatch repair. Has 5'-3' helicase activity that is probably ATP-dependent. The sequence is that of ATP-dependent RecD2 DNA helicase from Bacillus subtilis (strain 168).